Reading from the N-terminus, the 401-residue chain is Probable sodium/metabolite cotransporter BASS1, chloroplastic (401 aa).

The transit peptide at 1-70 (MASAISLSLL…RRSRFDFVPR (70 aa)) directs the protein to the chloroplast. 9 helical membrane passes run 92–112 (FVGEAVSTAFPIWVSLGCLLG), 122–142 (VTPNWTIVGLTITMLGMGMTL), 156–176 (ELFAGFLLQYSVMPLSAFFVS), 187–207 (AGLILVGCCPGGTASNIVTYI), 212–232 (VALSVLMTAASTVSAVIMTPL), 247–267 (LGLLMSTLQVVLLPVLAGAFL), 278–298 (VSPVMPPIAVGTVAILCGYAI), 311–331 (QVVLASCLLHISGFLFGYLFS), and 371–391 (VPCAVSSVCHSILGSVLAGIW).

The protein belongs to the bile acid:sodium symporter (BASS) (TC 2.A.28) family.

The protein localises to the membrane. It localises to the plastid. Its subcellular location is the chloroplast envelope. Functionally, may function as sodium-coupled metabolite transporter across the chloroplast envelope. The sequence is that of Probable sodium/metabolite cotransporter BASS1, chloroplastic (BASS1) from Arabidopsis thaliana (Mouse-ear cress).